The chain runs to 245 residues: MAGHSKWANIQHRKGRQDAKRGKLFTKAAKEIIIAAKGGGDPSMNPRLRAAIAAAKAVNLPKDKIEAAIRKGTGEDAGGDLTETFYEGYGPGGIAVMVEVATDNKNRTVAEVRHLFSKHGGSMGENGSVAWMFDRKGVISVEKSAYPEEKIMEAALEAGADDVIDDGEEWTIHTAMTDFTAVRDSLETAGIVMQSAELAMVPQNLVAVDADMGQKVLRLMDALDDNDDVQNVYANVDFPEDMPED.

The tract at residues 1-21 (MAGHSKWANIQHRKGRQDAKR) is disordered.

The protein belongs to the TACO1 family.

The protein resides in the cytoplasm. In Desulfovibrio desulfuricans (strain ATCC 27774 / DSM 6949 / MB), this protein is Probable transcriptional regulatory protein Ddes_0536.